The sequence spans 629 residues: Neuronal acetylcholine receptor subunit alpha-4 (629 aa).

The signal sequence occupies residues 1–30 (MEIGGSGAPPPLLLLPLLLLLGTGLLPASS). Topologically, residues 32–249 (IETRAHAEER…IIRRLPLFYT (218 aa)) are extracellular. A glycan (N-linked (GlcNAc...) asparagine) is linked at Asn59. Residues Val78 and Glu80 each coordinate Ca(2+). N-linked (GlcNAc...) asparagine glycosylation is found at Asn109 and Asn176. Cystine bridges form between Cys163/Cys177 and Cys227/Cys228. Residues 250 to 270 (INLIIPCLLISCLTVLVFYLP) form a helical membrane-spanning segment. Cys273 carries S-palmitoyl cysteine lipidation. Helical transmembrane passes span 279 to 299 (LCIS…EIIP) and 312 to 332 (LLFT…VLNV). Topologically, residues 333-603 (HHRSPRTHTM…KYVAMVIDRI (271 aa)) are cytoplasmic. Disordered stretches follow at residues 420–459 (ETQP…NSSG) and 503–529 (SLTE…SDQT). Ser427 is modified (phosphoserine). The segment covering 431 to 442 (KVPDLKTSEVEK) has biased composition (basic and acidic residues). Residues 449 to 459 (PGSCHPPNSSG) are compositionally biased toward low complexity. Polar residues predominate over residues 504-529 (LTESKPTGSPASLKTRPSQLPVSDQT). A phosphoserine mark is found at Ser540 and Ser543. A helical transmembrane segment spans residues 604 to 624 (FLWMFIIVCLLGTVGLFLPPW).

Belongs to the ligand-gated ion channel (TC 1.A.9) family. Acetylcholine receptor (TC 1.A.9.1) subfamily. Alpha-4/CHRNA4 sub-subfamily. Neuronal AChR is composed of two different types of subunits: alpha and beta. CHRNA4 forms heteropentameric neuronal acetylcholine receptors with CHRNB2 and CHRNB4, as well as CHRNA5 and CHRNB3 as accesory subunits. Found in two major stoichiometric forms, LS (low agonist sensitivity): (CHRNA4)3:(CHRNB2)2 and HS (high agonist sensitivity): (CHRNA4)2:(CHRNB2)3, the two stoichiometric forms differ in their unitary conductance, calcium permeability, ACh sensitivity and potentiation by divalent cation. Cells produce predominantly an (CHRNA4)3:(CHRNB2)2 nAChR. The (CHRNA4)2:(CHRNB2)3 expression is selectively up-regulated by nicotine and has lower single channel conductance and calcium permeability. In the striatum, also forms CHRNA4:CHRNA6:CHRNB2 complexes. Also found in the stoichiometric form: (CHRNA4:CHRNB2)2:CHRNB3. Interacts with RIC3; which is required for proper folding and assembly. Interacts with LYPD6.

The protein localises to the synaptic cell membrane. It is found in the cell membrane. The enzyme catalyses K(+)(in) = K(+)(out). The catalysed reaction is Na(+)(in) = Na(+)(out). It catalyses the reaction Ca(2+)(in) = Ca(2+)(out). Activated by a myriad of ligands such as acetylcholine, cytisine, nicotine, choline and epibatidine. Channel potentiation by calcium is stoichiometry-selective, CHRNA4:CHRNB2 nACh receptor is achieved by calcium association with topographically distinct sites framed by anionic residues within the CHRNA4 subunit and between the CHRNA4 and CHRNB2 subunits. nAChR activity is inhibited by the antagonist alpha-conotoxins BuIA, PnIA, GID and MII, small disulfide-constrained peptides from cone snails. Component of neuronal acetylcholine receptors (nAChRs) that function as pentameric, ligand-gated cation channels with high calcium permeability among other activities. nAChRs are excitatory neurotrasnmitter receptors formed by a collection of nAChR subunits known to mediate synaptic transmission in the nervous system and the neuromuscular junction. Each nAchR subunit confers differential attributes to channel properties, including activation, deactivation and desensitization kinetics, pH sensitivity, cation permeability, and binding to allosteric modulators. CHRNA4 forms heteropentameric neuronal acetylcholine receptors with CHRNB2 and CHRNB4, as well as CHRNA5 and CHRNB3 as accesory subunits. Is the most abundant nAChR subtype expressed in the central nervous system. Found in two major stoichiometric forms,(CHRNA4)3:(CHRNB2)2 and (CHRNA4)2:(CHRNB2)3, the two stoichiometric forms differ in their unitary conductance, calcium permeability, ACh sensitivity and potentiation by divalent cation. Involved in the modulation of calcium-dependent signaling pathways, influences the release of neurotransmitters, including dopamine, glutamate and GABA. This chain is Neuronal acetylcholine receptor subunit alpha-4 (Chrna4), found in Mus musculus (Mouse).